Reading from the N-terminus, the 427-residue chain is Peptidase B (427 aa).

The Mn(2+) site is built by Lys-195 and Asp-200. Lys-207 is an active-site residue. Asp-218, Asp-277, and Glu-279 together coordinate Mn(2+). Arg-281 is an active-site residue.

This sequence belongs to the peptidase M17 family. In terms of assembly, homohexamer. The cofactor is Mn(2+).

The protein localises to the cytoplasm. The catalysed reaction is Release of an N-terminal amino acid, Xaa, from a peptide or arylamide. Xaa is preferably Glu or Asp but may be other amino acids, including Leu, Met, His, Cys and Gln.. In terms of biological role, probably plays an important role in intracellular peptide degradation. This Shigella flexneri protein is Peptidase B.